The chain runs to 244 residues: Phosphoadenosine 5'-phosphosulfate reductase (244 aa).

The active-site Nucleophile; cysteine thiosulfonate intermediate is Cys-239.

It belongs to the PAPS reductase family. CysH subfamily.

It localises to the cytoplasm. It carries out the reaction [thioredoxin]-disulfide + sulfite + adenosine 3',5'-bisphosphate + 2 H(+) = [thioredoxin]-dithiol + 3'-phosphoadenylyl sulfate. It participates in sulfur metabolism; hydrogen sulfide biosynthesis; sulfite from sulfate: step 3/3. Functionally, catalyzes the formation of sulfite from phosphoadenosine 5'-phosphosulfate (PAPS) using thioredoxin as an electron donor. The sequence is that of Phosphoadenosine 5'-phosphosulfate reductase from Salmonella arizonae (strain ATCC BAA-731 / CDC346-86 / RSK2980).